The chain runs to 562 residues: NAD-dependent malic enzyme (562 aa).

The Proton donor role is filled by tyrosine 101. Position 154 (arginine 154) interacts with NAD(+). Catalysis depends on lysine 172, which acts as the Proton acceptor. Positions 243, 244, and 267 each coordinate a divalent metal cation. Residues aspartate 267 and asparagine 415 each coordinate NAD(+).

This sequence belongs to the malic enzymes family. As to quaternary structure, homotetramer. The cofactor is Mg(2+). Mn(2+) is required as a cofactor.

It catalyses the reaction (S)-malate + NAD(+) = pyruvate + CO2 + NADH. The catalysed reaction is oxaloacetate + H(+) = pyruvate + CO2. The sequence is that of NAD-dependent malic enzyme from Vibrio parahaemolyticus serotype O3:K6 (strain RIMD 2210633).